The primary structure comprises 229 residues: E3 ubiquitin-protein ligase RNF114 (229 aa).

A disordered region spans residues 1–23 (MAAAQPESRDGAAQSAKPASETD). Residues 30 to 69 (CPVCLEVFEKPVQVPCGHVFCSACLQECLKPKKPVCGVCR) form an RING-type zinc finger. C92 and C95 together coordinate Zn(2+). The segment at 92–111 (CHGCRKNFILSKIRAHVTSC) adopts a C2HC RNF-type zinc-finger fold. K103 is modified (N6-acetyllysine). Zn(2+)-binding residues include H107 and C111. Residue K113 is modified to N6-acetyllysine.

As to quaternary structure, interacts with XAF1, the interaction increases XAF1 stability and proapoptotic effects, and may regulate IFN signaling. Autoubiquitinated. Polyubiquitinated in the presence of E2 enzymes UBE2D1, UBE2D2 and UBE2D3, but only monoubiquitinated in the presence of UBE2E1.

The protein resides in the cytoplasm. The protein localises to the nucleus. The enzyme catalyses S-ubiquitinyl-[E2 ubiquitin-conjugating enzyme]-L-cysteine + [acceptor protein]-L-lysine = [E2 ubiquitin-conjugating enzyme]-L-cysteine + N(6)-ubiquitinyl-[acceptor protein]-L-lysine.. It functions in the pathway protein modification; protein ubiquitination. In terms of biological role, E3 ubiquitin-protein ligase that promotes the ubiquitination of various substrates. In turn, participates in the regulation of many biological processes including cell cycle, apoptosis, osteoclastogenesis as well as innate or adaptive immunity. Acts as negative regulator of NF-kappa-B-dependent transcription by promoting the ubiquitination and stabilization of the NF-kappa-B inhibitor TNFAIP3. May promote the ubiquitination of TRAF6 as well. Also acts as a negative regulator of T-cell activation. Inhibits cellular dsRNA responses and interferon production by targeting MAVS component for proteasomal degradation. Ubiquitinates the CDK inhibitor CDKN1A leading to its degradationand probably also CDKN1B and CDKN1C. This activity stimulates cell cycle G1-to-S phase transition and suppresses cellular senescence. May play a role in spermatogenesis. This Mus musculus (Mouse) protein is E3 ubiquitin-protein ligase RNF114 (Rnf114).